A 538-amino-acid chain; its full sequence is MFS-type transporter tndD (538 aa).

Residues 1 to 42 (MSLSGSDSHLAVSPTLAEDMNSSDTSAGLAETPPADEEKRSI) are disordered. 2 N-linked (GlcNAc...) asparagine glycosylation sites follow: asparagine 21 and asparagine 71. A run of 11 helical transmembrane segments spans residues 81-101 (VGIVSALTFITPLASSMFAPG), 115-135 (LLAGFVVSVYVLGFAIGPLIL), 153-173 (ICFTVFSIACALSTNLGMLIA), 203-223 (GGVIAIYALGPLLGPVIGPVA), 235-255 (WVFWVLAIVGGGCTLASFLFL), 309-329 (PIVAASSVYVGIVYGYQYLMF), 348-368 (GLTFLGTGVGSLLGLFVIGAV), 394-414 (LPPLVWGAFFIPAGLFMYGWS), 422-442 (IVPIIGTGLVGIGNIAVFMCI), 444-464 (SYLVDAFTIFAASALAANTVV), and 485-505 (LGWGNSLLGFIAVVCIPIPWA).

The protein belongs to the major facilitator superfamily.

It is found in the membrane. MFS-type transporter; part of the gene cluster that mediates the biosynthesis of talaronoid C, a fusicoccane diterpenoid with an unprecedented tricyclic 5/8/6 ring system. This chain is MFS-type transporter tndD, found in Aspergillus flavipes.